The following is a 449-amino-acid chain: Nucleoprotein (449 aa).

Residues 1–55 (MSFTPGKQSSSRASSGNRSGNGILKWADQSDQSRNVQTRGRRVQSKQTATSQQPS) form a disordered region. Residues 9 to 22 (SSSRASSGNRSGNG) show a composition bias toward low complexity. Composition is skewed to polar residues over residues 29 to 38 (QSDQSRNVQT) and 45 to 55 (SKQTATSQQPS). The segment at 52–194 (QQPSGGTVVP…GYYIEGSGRS (143 aa)) is RNA-binding. A CoV N NTD domain is found at 61 to 190 (PYYSWFSGIT…VLPQGYYIEG (130 aa)). Residues Arg106, Arg122, and Arg164 each contribute to the RNA site. Disordered regions lie at residues 158–231 (PADI…VTPD), 266–297 (ILNK…NFGG), and 387–449 (MMNI…TSEI). Position 167 is a phosphoserine; by host (Ser167). Thr174 carries the phosphothreonine; by host modification. Phosphoserine; by host is present on Ser191. 2 stretches are compositionally biased toward polar residues: residues 194-204 (SAPNSRSTSRA) and 212-227 (GSRS…STPG). The 126-residue stretch at 259 to 384 (AKEVRQKILN…QNLNAYQHQE (126 aa)) folds into the CoV N CTD domain. The span at 266–276 (ILNKPRQKRSP) shows a compositional bias: basic residues. Residues 266–385 (ILNKPRQKRS…NLNAYQHQED (120 aa)) form a dimerization region. Ser391 is modified (phosphoserine; by host). The segment covering 400–410 (QKNGQVENDNV) has biased composition (polar residues). The span at 423-440 (KSRELTAEDISLLKKMDE) shows a compositional bias: basic and acidic residues. Residue Ser424 is modified to Phosphoserine; by host. Thr428 is modified (phosphothreonine; by host).

The protein belongs to the betacoronavirus nucleocapsid protein family. As to quaternary structure, homooligomer. Both monomeric and oligomeric forms interact with RNA. Interacts with protein M. Interacts with NSP3; this interaction serves to tether the genome to the newly translated replicase-transcriptase complex at a very early stage of infection. ADP-ribosylated. The ADP-ribosylation is retained in the virion during infection. In terms of processing, phosphorylated on serine and threonine residues.

It is found in the virion. The protein localises to the host endoplasmic reticulum-Golgi intermediate compartment. The protein resides in the host Golgi apparatus. In terms of biological role, packages the positive strand viral genome RNA into a helical ribonucleocapsid (RNP) and plays a fundamental role during virion assembly through its interactions with the viral genome and membrane protein M. Plays an important role in enhancing the efficiency of subgenomic viral RNA transcription as well as viral replication. The sequence is that of Nucleoprotein from Sus scrofa (Pig).